The sequence spans 317 residues: Pantothenate kinase (317 aa).

99–106 contacts ATP; the sequence is GSVSVGKS.

The protein belongs to the prokaryotic pantothenate kinase family.

Its subcellular location is the cytoplasm. The enzyme catalyses (R)-pantothenate + ATP = (R)-4'-phosphopantothenate + ADP + H(+). It participates in cofactor biosynthesis; coenzyme A biosynthesis; CoA from (R)-pantothenate: step 1/5. The protein is Pantothenate kinase of Histophilus somni (strain 129Pt) (Haemophilus somnus).